Reading from the N-terminus, the 462-residue chain is Cytochrome b558/566 subunit A (462 aa).

Residues 1 to 8 (MSLKIKSK) lie on the Cytoplasmic side of the membrane. The chain crosses the membrane as a helical span at residues 9-26 (ITIGVLLIIFLLSIIFTL). Over 27-431 (ENVSLAQTSP…TSTSPVTTIS (405 aa)) the chain is Extracellular. N-linked (GlcNAc...) asparagine glycosylation is found at Asn28, Asn65, Asn91, Asn121, Asn144, Asn164, Asn174, Asn183, Asn211, Asn278, Asn279, Asn293, Asn316, Asn339, Asn353, and Asn376. Residues 432 to 456 (SAIPPVTLYVTIIGVVVALVALVIL) traverse the membrane as a helical segment. Residues 457–462 (YVVFRR) are Cytoplasmic-facing.

Requires heme as cofactor. Post-translationally, N-glycosylated on at least seven Asn residues by identical hexasaccharide units composed of Man, GlcNAc, Glc and 6-deoxy-6-sulfoglucose residues in the molar ration of 2:2:1:1. O-glycosylated on probably as many as 35 positions by single Man residues.

The protein localises to the cell membrane. In terms of biological role, monoheme cytochrome whose physiological function is not yet clear. The sequence is that of Cytochrome b558/566 subunit A (cbsA) from Sulfolobus acidocaldarius (strain ATCC 33909 / DSM 639 / JCM 8929 / NBRC 15157 / NCIMB 11770).